Here is a 327-residue protein sequence, read N- to C-terminus: rRNA 2'-O-methyltransferase fibrillarin (327 aa).

The segment at 1–96 (MGTDYRNSGR…GFKGGAKTMV (96 aa)) is disordered. Residues arginine 10, arginine 19, arginine 44, arginine 49, arginine 55, arginine 65, arginine 69, and arginine 78 each carry the asymmetric dimethylarginine modification. Positions 22–56 (GNDRRDSGRSFGDRRPERPDFKRGDGGRGFGDRRG) are enriched in basic and acidic residues. Residues 73–90 (DGPGGRGGPGGPGGGFKG) are compositionally biased toward gly residues. Residues 181–182 (TT), 200–201 (EF), 225–226 (DA), and 245–248 (DVAQ) each bind S-adenosyl-L-methionine.

Belongs to the methyltransferase superfamily. Fibrillarin family. As to quaternary structure, component of box C/D small nucleolar ribonucleoprotein (snoRNP) particles. It is associated with the U3, U8 and U13 small nuclear RNAs. Post-translationally, by homology to other fibrillarins, some or all of the N-terminal domain arginines are modified to asymmetric dimethylarginine (DMA).

It is found in the nucleus. It localises to the nucleolus. It catalyses the reaction L-glutaminyl-[histone H2A] + S-adenosyl-L-methionine = N(5)-methyl-L-glutaminyl-[histone H2A] + S-adenosyl-L-homocysteine + H(+). Its function is as follows. S-adenosyl-L-methionine-dependent methyltransferase that has the ability to methylate both RNAs and proteins. Involved in pre-rRNA processing. Utilizes the methyl donor S-adenosyl-L-methionine to catalyze the site-specific 2'-hydroxyl methylation of ribose moieties in pre-ribosomal RNA. Site specificity is provided by a guide RNA that base pairs with the substrate. Methylation occurs at a characteristic distance from the sequence involved in base pairing with the guide RNA. Also acts as a protein methyltransferase by mediating methylation of 'Gln-105' of histone H2A (H2AQ105me), a modification that impairs binding of the FACT complex and is specifically present at 35S ribosomal DNA locus. In Giardia intestinalis (Giardia lamblia), this protein is rRNA 2'-O-methyltransferase fibrillarin.